Consider the following 471-residue polypeptide: D-hydantoinase (471 aa).

Residues H58, H60, and K150 each coordinate Zn(2+). K150 carries the post-translational modification N6-carboxylysine. Position 155 (Y155) interacts with substrate. Positions 183 and 239 each coordinate Zn(2+). Position 288 (S288) interacts with substrate. Residue D315 coordinates Zn(2+). A substrate-binding site is contributed by N337.

This sequence belongs to the metallo-dependent hydrolases superfamily. Hydantoinase/dihydropyrimidinase family. In terms of assembly, homotetramer. Zn(2+) is required as a cofactor. Requires Ni(2+) as cofactor. The cofactor is Co(2+). Mn(2+) serves as cofactor. Carboxylation allows a single lysine to coordinate two zinc ions.

With respect to regulation, completely inhibited by p-chloromercuribenzoate and partially inhibited by metal chelating agents. Its function is as follows. Catalyzes the stereospecific hydrolysis of the cyclic amide bond of D-hydantoin. Has no activity on dihydropyrimidines. The polypeptide is D-hydantoinase (Geobacillus stearothermophilus (Bacillus stearothermophilus)).